Here is a 378-residue protein sequence, read N- to C-terminus: RNA polymerase sigma factor SigA (378 aa).

A disordered region spans residues 1–29 (MKNKTEVKNGGEKKNSKKVSKEESAKEKN). The segment at 145–215 (LAEANLRLVV…TRAIADQART (71 aa)) is sigma-70 factor domain-2. The short motif at 169-172 (DLIQ) is the Interaction with polymerase core subunit RpoC element. Residues 224–300 (ETINKLIRVS…DDEAPAPADA (77 aa)) form a sigma-70 factor domain-3 region. Residues 313–366 (ILNTLTPREEKVLRLRFGLDDGRARTLEEVGKEFNVTRERIRQIEAKALRKLRH) form a sigma-70 factor domain-4 region. Positions 339-358 (LEEVGKEFNVTRERIRQIEA) form a DNA-binding region, H-T-H motif.

The protein belongs to the sigma-70 factor family. RpoD/SigA subfamily. Interacts transiently with the RNA polymerase catalytic core.

It localises to the cytoplasm. Its function is as follows. Sigma factors are initiation factors that promote the attachment of RNA polymerase to specific initiation sites and are then released. This sigma factor is the primary sigma factor during exponential growth. The sequence is that of RNA polymerase sigma factor SigA from Clostridium acetobutylicum (strain ATCC 824 / DSM 792 / JCM 1419 / IAM 19013 / LMG 5710 / NBRC 13948 / NRRL B-527 / VKM B-1787 / 2291 / W).